The chain runs to 996 residues: P3N-PIPO polyprotein (996 aa).

One can recognise a Peptidase S30 domain in the interval 173–313 (VVRSASVNNL…VFFYDDVDHY (141 aa)). Catalysis depends on for P1 proteinase activity residues histidine 226, glutamate 235, and serine 267. The Involved in interaction with stylet and aphid transmission signature appears at 365 to 368 (KLSC). The Involved in virions binding and aphid transmission motif lies at 621–623 (PTK). Residues 647-769 (MYIAKEGYCY…QSEMKHYRVG (123 aa)) enclose the Peptidase C6 domain. Residues cysteine 655 and histidine 728 each act as for helper component proteinase activity in the active site.

It belongs to the potyviridae P3N-PIPO polyprotein family. Interacts (via PIPO domain) with host PCaP1 protein; this interaction may help to anchor the movement complex to the plasma membrane from which the complex could move to the plasmodesmata. Potyviral RNA is expressed as two polyproteins which undergo post-translational proteolytic processing. Genome polyprotein is processed by NIa-pro, P1 and HC-pro proteinases resulting in the production of at least ten individual proteins. P3N-PIPO is cleaved by P1 and HC-pro proteinases resulting in the production of three individual proteins. The P1 proteinase and the HC-pro cleave only their respective C-termini autocatalytically.

The protein localises to the host cell junction. It is found in the host plasmodesma. The enzyme catalyses Hydrolyzes a Gly-|-Gly bond at its own C-terminus, commonly in the sequence -Tyr-Xaa-Val-Gly-|-Gly, in the processing of the potyviral polyprotein.. Functionally, required for aphid transmission and also has proteolytic activity. Only cleaves a Gly-Gly dipeptide at its own C-terminus. Interacts with virions and aphid stylets. Acts as a suppressor of RNA-mediated gene silencing, also known as post-transcriptional gene silencing (PTGS), a mechanism of plant viral defense that limits the accumulation of viral RNAs. May have RNA-binding activity. In terms of biological role, allows efficient cell to cell propagation, by bypassing the host cell wall barrier. Transports viral genome to neighboring plant cells directly through plasmosdesmata, without any budding. This chain is P3N-PIPO polyprotein, found in Zucchini yellow mosaic virus (strain Reunion Island) (ZYMV).